We begin with the raw amino-acid sequence, 283 residues long: Glutamate racemase (283 aa).

Substrate contacts are provided by residues 13–14 (DS) and 45–46 (YG). The active-site Proton donor/acceptor is C76. 77-78 (NT) contacts substrate. C186 (proton donor/acceptor) is an active-site residue. 187–188 (TH) serves as a coordination point for substrate.

The protein belongs to the aspartate/glutamate racemases family.

The enzyme catalyses L-glutamate = D-glutamate. It participates in cell wall biogenesis; peptidoglycan biosynthesis. In terms of biological role, provides the (R)-glutamate required for cell wall biosynthesis. This Microcystis aeruginosa (strain NIES-843 / IAM M-2473) protein is Glutamate racemase.